The sequence spans 185 residues: Hypoxanthine/guanine phosphoribosyltransferase (185 aa).

This sequence belongs to the purine/pyrimidine phosphoribosyltransferase family. Archaeal HPRT subfamily. As to quaternary structure, homodimer.

It localises to the cytoplasm. It catalyses the reaction IMP + diphosphate = hypoxanthine + 5-phospho-alpha-D-ribose 1-diphosphate. The enzyme catalyses GMP + diphosphate = guanine + 5-phospho-alpha-D-ribose 1-diphosphate. It participates in purine metabolism; IMP biosynthesis via salvage pathway; IMP from hypoxanthine: step 1/1. Catalyzes a salvage reaction resulting in the formation of IMP that is energically less costly than de novo synthesis. This chain is Hypoxanthine/guanine phosphoribosyltransferase, found in Methanococcus maripaludis (strain C7 / ATCC BAA-1331).